Reading from the N-terminus, the 331-residue chain is Small ribosomal subunit protein uS2 (331 aa).

Belongs to the universal ribosomal protein uS2 family.

The chain is Small ribosomal subunit protein uS2 from Rhodopseudomonas palustris (strain BisB5).